The following is a 25-amino-acid chain: MRAKWRKKRMRRLKRKRRKMRQRSK.

The interval 1 to 25 is disordered; it reads MRAKWRKKRMRRLKRKRRKMRQRSK.

This sequence belongs to the eukaryotic ribosomal protein eS32 family. Component of the large ribosomal subunit.

The protein localises to the cytoplasm. Its function is as follows. Component of the small ribosomal subunit. The ribosome is a large ribonucleoprotein complex responsible for the synthesis of proteins in the cell. This Cyprinus carpio (Common carp) protein is Small ribosomal subunit protein eS32 (rpl41).